An 806-amino-acid polypeptide reads, in one-letter code: U3 small nucleolar RNA-associated protein 17 (806 aa).

WD repeat units lie at residues 266 to 305 (WHAN…RQFL), 448 to 489 (RNGL…KTWV), 499 to 538 (GNLE…SAWK), and 598 to 635 (PHGG…VQWT).

Component of the ribosomal small subunit (SSU) processome.

The protein resides in the nucleus. Its subcellular location is the nucleolus. Its function is as follows. Involved in nucleolar processing of pre-18S ribosomal RNA. Required for optimal pre-ribosomal RNA transcription by RNA polymerase I together with a subset of U3 proteins required for transcription (t-UTPs). The polypeptide is U3 small nucleolar RNA-associated protein 17 (utp17) (Schizosaccharomyces pombe (strain 972 / ATCC 24843) (Fission yeast)).